Here is a 151-residue protein sequence, read N- to C-terminus: Differentiation-associated protein 2 (151 aa).

The first 22 residues, 1-22, serve as a signal peptide directing secretion; sequence MKQIIRLITTLLLLSLIGITCA.

The protein resides in the endoplasmic reticulum. It is found in the vacuole. Its function is as follows. Has an essential role in the initiation of differentiation. Also required for cAMP signaling. The chain is Differentiation-associated protein 2 (dia2) from Dictyostelium discoideum (Social amoeba).